Here is a 289-residue protein sequence, read N- to C-terminus: Protoheme IX farnesyltransferase 2 (289 aa).

A run of 9 helical transmembrane segments spans residues 1 to 21 (MIKP…FLLA), 28 to 48 (LTLM…GCGL), 76 to 96 (YSVL…LAIF), 100 to 120 (IALL…SLYM), 125 to 145 (VYGT…GYCA), 155 to 175 (VILL…IAIF), 199 to 219 (LHIV…PLAG), 221 to 241 (TGIA…GMAL), and 260 to 280 (CSIV…QLVV).

It belongs to the UbiA prenyltransferase family. Protoheme IX farnesyltransferase subfamily.

It localises to the cell inner membrane. The enzyme catalyses heme b + (2E,6E)-farnesyl diphosphate + H2O = Fe(II)-heme o + diphosphate. The protein operates within porphyrin-containing compound metabolism; heme O biosynthesis; heme O from protoheme: step 1/1. Its function is as follows. Converts heme B (protoheme IX) to heme O by substitution of the vinyl group on carbon 2 of heme B porphyrin ring with a hydroxyethyl farnesyl side group. The polypeptide is Protoheme IX farnesyltransferase 2 (Shewanella woodyi (strain ATCC 51908 / MS32)).